The sequence spans 196 residues: MLKLFCLFAAALVLFHVDITSACGSSTDSEYIQNPVFQMQISPPVGWTYFPSTPSVTSQAIWYFVGQSNDTTTAKNRADAELTAAMLEALIAANMQTQGVTIANDFQPIQIENPQTTTPTGSLYGKVEGGALVSTAPGVTTGAILTYTPYHITLRVTVNNIGATRFYWNIAENTFLQKMTMNYKAQFTGDVTVTKV.

This is an uncharacterized protein from Caenorhabditis elegans.